A 431-amino-acid chain; its full sequence is MTTRYRVEYALKTHRRDQFIEWIKALLAVPFVLYSQPHGVLEDPDRSVDTLSQTREEAHRRYSEIFRDIEAMIDDHIAHQNDAENPFPSKLKLLVPSIGPFFTRLPLEAAFKFQDNKRYISSRRFVSPSFNDIRLILNSAQIMAVTTYGTLQLATFDGDVTLYDDGQSLEPTSPVIPRLLDLLRKNVKIGIVTAAGYTTADRYYSRLHGLLDAMANSADLTPSQKQSLVVMGGEANYLFEFDSSSPHLLAPVPRQHWLTPEMAAWNEQDIAQLLDVAEAALRDCIKTLNLPATLMRKDRAVGIIPVSPEIRIPRESLEETVLLVQKILELSTVGRSRRVPFCAFNGGRDVFVDIGDKSWGVTVCQRWFSQKEGPHGVIKGENTLHVGDQFLSAGANDFRARSVGTTAWIASPVETVELLDELAELMGKKMS.

Lys117 contacts ATP. Residue Asp157 is the Nucleophile of the active site. Residues Asp157, Asp159, Asp165, Thr193, Asp349, and Lys357 each coordinate IMP. Positions 157 and 159 each coordinate Mg(2+). Asp159 (proton donor) is an active-site residue. Residue Asp388 coordinates Mg(2+).

The protein belongs to the ISN1 family. Homotetramer. It depends on Mg(2+) as a cofactor.

The catalysed reaction is IMP + H2O = inosine + phosphate. Its activity is regulated as follows. Allosterically activated by ATP. ATP binding is a prerequisite to magnesium and substrate binding. ATP binds to 2 of the subunits in the homotetramer inducing a closure of these 2 subunits and the release of the C-terminal loop, thereby activating the enzyme. IMP-specific 5'-nucleotidase involved in IMP (inositol monophosphate) degradation. This chain is IMP-specific 5'-nucleotidase 1 (isn-1), found in Neurospora crassa (strain ATCC 24698 / 74-OR23-1A / CBS 708.71 / DSM 1257 / FGSC 987).